The primary structure comprises 816 residues: Two pore channel protein 1 (816 aa).

Over 1–112 the chain is Cytoplasmic; that stretch reads MAVSLDDDVP…AHNHLFYLME (112 aa). The segment at 17–64 is disordered; the sequence is EGGSAPLAPSNGLGQEELPSKNGGSYAIHDSQAPSLSSGGESSPSSPA. Residues 50-63 are compositionally biased toward low complexity; it reads PSLSSGGESSPSSP. A helical membrane pass occupies residues 113 to 133; sequence LATALLLLLLSLCEAPAVPAL. Arginine 134 is a topological domain (extracellular). Residues 135-155 form a helical membrane-spanning segment; sequence LGIYVHATLELFALMVVVFEL. Over 156–177 the chain is Cytoplasmic; the sequence is CMKLRWLGLHTFIRHKRTMVKT. The helical transmembrane segment at 178 to 198 threads the bilayer; it reads SVLVVQFVEAIVVLVRQMSHV. At 199–200 the chain is on the extracellular side; sequence RV. Residues 201 to 220 traverse the membrane as a helical segment; it reads TRALRCIFLVDCRYCGGVRR. The Cytoplasmic portion of the chain corresponds to 221–234; it reads NLRQIFQSLPPFMD. Residues 235–255 form a helical membrane-spanning segment; it reads ILLLLLFFMIIFAILGFYLFS. At 256–262 the chain is on the extracellular side; that stretch reads PNPSDPY. The helical; Pore-forming intramembrane region spans 263 to 286; the sequence is FSTLENSIVSLFVLLTTANFPDVM. At 287–294 the chain is on the extracellular side; it reads MPSYSRNP. A helical membrane pass occupies residues 295 to 315; it reads WSCVFFIVYLSIELYFIMNLL. Topologically, residues 316-444 are cytoplasmic; the sequence is LAVVFDTFND…NILVKSKAFQ (129 aa). Residues 445-465 form a helical membrane-spanning segment; sequence YFMYLVVAVNGVWILVETFML. The Extracellular segment spans residues 466 to 479; the sequence is KGGNFFSKHVPWSY. A helical membrane pass occupies residues 480–500; the sequence is LVFLTIYGVELFLKVAGLGPV. Over 501–503 the chain is Cytoplasmic; the sequence is EYL. The chain crosses the membrane as a helical span at residues 504–526; it reads SSGWNLFDFSVTVFAFLGLLALA. The Extracellular segment spans residues 527–534; that stretch reads LNMEPFYF. A helical membrane pass occupies residues 535–549; sequence IVVLRPLQLLRLFKL. Over 550 to 573 the chain is Cytoplasmic; sequence KERYRNVLDTMFELLPRMASLGLT. A helical membrane pass occupies residues 574–594; that stretch reads LLIFYYSFAIVGMEFFCGIVF. Topologically, residues 595–629 are extracellular; that stretch reads PNCCNTSTVADAYRWRNHTVGNRTVVEEGYYYLNN. 3 N-linked (GlcNAc...) asparagine glycosylation sites follow: asparagine 599, asparagine 611, and asparagine 616. The segment at residues 630–653 is an intramembrane region (helical; Pore-forming); it reads FDNILNSFVTLFELTVVNNWYIIM. At 654–670 the chain is on the extracellular side; that stretch reads EGVTSQTSHWSRLYFMT. A helical membrane pass occupies residues 671–691; the sequence is FYIVTMVVMTIIVAFILEAFV. Over 692-816 the chain is Cytoplasmic; sequence FRMNYSRKNQ…GSRQRSQTVT (125 aa). A coiled-coil region spans residues 769–796; the sequence is SLKMYQEEIQEWYEEHAREQEQQRQLSS. The tract at residues 782–816 is disordered; it reads EEHAREQEQQRQLSSSAAPAAQQPPGSRQRSQTVT. Low complexity predominate over residues 791–816; sequence QRQLSSSAAPAAQQPPGSRQRSQTVT.

It belongs to the calcium channel alpha-1 subunit (TC 1.A.1.11) family. Two pore calcium channel subfamily. Dimer. Interacts with MTOR; the interaction is required for TPCN1 ATP sensitivity. Interacts with STX7, STX8 and STX12. Interacts with JPT2. Found in a complex with LSM12, TPCN1 and TPCN2. Post-translationally, N-glycosylated. Highest expression found in the heart and kidney, and lowest expression found in the spleen.

Its subcellular location is the lysosome membrane. The protein localises to the endosome membrane. It is found in the early endosome membrane. The protein resides in the recycling endosome membrane. The catalysed reaction is Na(+)(in) = Na(+)(out). It catalyses the reaction Ca(2+)(in) = Ca(2+)(out). Its activity is regulated as follows. Na(+) current is inhibited by ATP in a MTORC-dependent manner. ATP sensitivity is independent of PI(3,5)P2. Probably regulated by Mg(2+) ions, cytosolic Mg(2+) selectively inhibits outward current while lysosomal Mg(2+) modestly inhibits both the outward and inward currents. In the absence of Mg(2+), NAADP readily activates TPCN2, with properties similar to PI(3,5)P2. Both current elicited by PI(3,5)P2 as well as NAADP are inhibited by tetrandrine. In terms of biological role, intracellular channel initially characterized as a non-selective Ca(2+)-permeable channel activated by NAADP (nicotinic acid adenine dinucleotide phosphate), it is also a voltage-gated highly-selective Na(+) channel activated directly by PI(3,5)P2 (phosphatidylinositol 3,5-bisphosphate) that senses pH changes and confers electrical excitability to organelles. Localizes to the early and recycling endosomes membranes where it plays a role in the uptake and processing of proteins and regulates organellar membrane excitability, membrane trafficking and pH homeostasis. Ion selectivity is not fixed but rather agonist-dependent and under defined ionic conditions, can be readily activated by both NAADP and PI(3,5)P2. Required for mTOR-dependent nutrient sensing. Functionally, (Microbial infection) During Ebola virus (EBOV) infection, controls the movement of endosomes containing virus particles and is required by EBOV to escape from the endosomal network into the cell cytoplasm. The polypeptide is Two pore channel protein 1 (Homo sapiens (Human)).